The primary structure comprises 599 residues: Vitamin B12-dependent ribonucleotide reductase (599 aa).

193–197 (PTGTI) contacts substrate. Residues 519-555 (LAQSAPRQAGPAKAATTAPAAKAQEPAAAPSPKQAHN) are disordered. The segment covering 526–553 (QAGPAKAATTAPAAKAQEPAAAPSPKQA) has biased composition (low complexity).

It belongs to the ribonucleoside diphosphate reductase class-2 family. Adenosylcob(III)alamin serves as cofactor.

The catalysed reaction is a 2'-deoxyribonucleoside 5'-diphosphate + [thioredoxin]-disulfide + H2O = a ribonucleoside 5'-diphosphate + [thioredoxin]-dithiol. Its function is as follows. Catalyzes the reduction of ribonucleotides to deoxyribonucleotides. May function to provide a pool of deoxyribonucleotide precursors for DNA repair during oxygen limitation and/or for immediate growth after restoration of oxygen. The polypeptide is Vitamin B12-dependent ribonucleotide reductase (nrdJ) (Streptantibioticus cattleyicolor (Streptomyces cattleya)).